Consider the following 648-residue polypeptide: Acetyl-coenzyme A synthetase (648 aa).

Residues 191–194, Thr310, and Asn334 contribute to the CoA site; that span reads RGGR. Residues 386–388, 410–415, Asp499, and Arg514 each bind ATP; these read GEP and DTWWQT. Position 522 (Ser522) interacts with CoA. Arg525 is a binding site for ATP. Mg(2+) contacts are provided by Val536, His538, and Ile541. Arg583 provides a ligand contact to CoA. Position 608 is an N6-acetyllysine (Lys608).

The protein belongs to the ATP-dependent AMP-binding enzyme family. Mg(2+) serves as cofactor. Post-translationally, acetylated. Deacetylation by the SIR2-homolog deacetylase activates the enzyme.

The enzyme catalyses acetate + ATP + CoA = acetyl-CoA + AMP + diphosphate. In terms of biological role, catalyzes the conversion of acetate into acetyl-CoA (AcCoA), an essential intermediate at the junction of anabolic and catabolic pathways. AcsA undergoes a two-step reaction. In the first half reaction, AcsA combines acetate with ATP to form acetyl-adenylate (AcAMP) intermediate. In the second half reaction, it can then transfer the acetyl group from AcAMP to the sulfhydryl group of CoA, forming the product AcCoA. The sequence is that of Acetyl-coenzyme A synthetase from Aeromonas hydrophila subsp. hydrophila (strain ATCC 7966 / DSM 30187 / BCRC 13018 / CCUG 14551 / JCM 1027 / KCTC 2358 / NCIMB 9240 / NCTC 8049).